The following is a 381-amino-acid chain: Probable tRNA sulfurtransferase (381 aa).

Residues 60 to 168 (REATEVLTRV…EGKAYIFVDK (109 aa)) form the THUMP domain. Residues 186–187 (LL), Lys-269, Gly-291, and Gln-300 contribute to the ATP site.

This sequence belongs to the ThiI family.

The protein resides in the cytoplasm. It carries out the reaction [ThiI sulfur-carrier protein]-S-sulfanyl-L-cysteine + a uridine in tRNA + 2 reduced [2Fe-2S]-[ferredoxin] + ATP + H(+) = [ThiI sulfur-carrier protein]-L-cysteine + a 4-thiouridine in tRNA + 2 oxidized [2Fe-2S]-[ferredoxin] + AMP + diphosphate. It catalyses the reaction [ThiS sulfur-carrier protein]-C-terminal Gly-Gly-AMP + S-sulfanyl-L-cysteinyl-[cysteine desulfurase] + AH2 = [ThiS sulfur-carrier protein]-C-terminal-Gly-aminoethanethioate + L-cysteinyl-[cysteine desulfurase] + A + AMP + 2 H(+). It participates in cofactor biosynthesis; thiamine diphosphate biosynthesis. Catalyzes the ATP-dependent transfer of a sulfur to tRNA to produce 4-thiouridine in position 8 of tRNAs, which functions as a near-UV photosensor. Also catalyzes the transfer of sulfur to the sulfur carrier protein ThiS, forming ThiS-thiocarboxylate. This is a step in the synthesis of thiazole, in the thiamine biosynthesis pathway. The sulfur is donated as persulfide by IscS. This Thermococcus kodakarensis (strain ATCC BAA-918 / JCM 12380 / KOD1) (Pyrococcus kodakaraensis (strain KOD1)) protein is Probable tRNA sulfurtransferase.